A 280-amino-acid polypeptide reads, in one-letter code: CAG pathogenicity island protein 12 (280 aa).

The signal sequence occupies residues 1 to 20; that stretch reads MKLRASVLIGATILCLILSA. Cys21 is lipidated: N-palmitoyl cysteine. Cys21 carries the S-diacylglycerol cysteine lipid modification.

The protein localises to the cell membrane. The sequence is that of CAG pathogenicity island protein 12 (cagT) from Helicobacter pylori (strain ATCC 700392 / 26695) (Campylobacter pylori).